The sequence spans 300 residues: Cholesterol 25-hydroxylase-like protein (300 aa).

N-linked (GlcNAc...) asparagine glycosylation occurs at Asn9. 3 helical membrane-spanning segments follow: residues 43 to 63, 95 to 115, and 130 to 152; these read LFPPFYALSIDYTWVAVFTFI, LQGWNQLLWIYPMALVQLIWV, and MVSQLAIFFLAFDFTYFWFHYFN. The 132-residue stretch at 135–266 folds into the Fatty acid hydroxylase domain; that stretch reads AIFFLAFDFT…WFNYLDRLMG (132 aa). The Histidine box-1 motif lies at 148 to 152; it reads FHYFN. A Histidine box-2 motif is present at residues 163 to 167; that stretch reads HSVHH. The chain crosses the membrane as a helical span at residues 180 to 200; it reads LHPFELFFVATFITTVPWIFP. A Histidine box-3 motif is present at residues 242-248; sequence AHDMHHL.

It belongs to the sterol desaturase family. It depends on Fe cation as a cofactor.

Its subcellular location is the membrane. In terms of biological role, probable sterol desaturase. The protein is Cholesterol 25-hydroxylase-like protein of Caenorhabditis briggsae.